A 367-amino-acid polypeptide reads, in one-letter code: Isocitrate dehydrogenase [NAD] regulatory subunit 1, mitochondrial (367 aa).

The transit peptide at 1–25 directs the protein to the mitochondrion; sequence MSRRSLTLLKNLARNANGSGIQTRS.

Belongs to the isocitrate and isopropylmalate dehydrogenases family. In terms of assembly, heterooligomer of catalytic and regulatory subunits. In terms of tissue distribution, ubiquitous. Predominantly expressed in roots, stems and leaves.

The protein localises to the mitochondrion. Functionally, performs an essential role in the oxidative function of the citric acid cycle. The chain is Isocitrate dehydrogenase [NAD] regulatory subunit 1, mitochondrial (IDH1) from Arabidopsis thaliana (Mouse-ear cress).